Reading from the N-terminus, the 436-residue chain is Transcription factor Sox-10 (436 aa).

Disordered regions lie at residues 1 to 55 (MSDD…ERFP), 145 to 183 (RLRMQHKKDHPDYKYQPRRRKNGKPNPGEGDGSSEAEGG), 195 to 257 (HLDH…DFGN), 322 to 346 (PQTDSKAQVKTESSSTSHYTEQPST), and 413 to 436 (SPSVAQSHSPTHWEQPVYTTLSRP). K44 is covalently cross-linked (Glycyl lysine isopeptide (Lys-Gly) (interchain with G-Cter in SUMO)). The interval 48–88 (DSEDERFPVCIREAVSQVLSGYDWTLVPMPVRVNGGSKSKP) is dimerization (DIM). The HMG box DNA-binding region spans 90–158 (VKRPMNAFMV…QHKKDHPDYK (69 aa)). Positions 145-159 (RLRMQHKKDHPDYKY) are enriched in basic and acidic residues. 2 stretches are compositionally biased toward polar residues: residues 205–215 (SDGNSEHSAGQ) and 331–346 (KTESSSTSHYTEQPST). A transactivation domain (TAM) region spans residues 209-295 (SEHSAGQSHG…NGHAGHPSHI (87 aa)). The segment at 327–436 (KAQVKTESSS…QPVYTTLSRP (110 aa)) is transactivation domain (TAC). K331 is covalently cross-linked (Glycyl lysine isopeptide (Lys-Gly) (interchain with G-Cter in SUMO)).

As to quaternary structure, interacts with the sumoylation factors ube2i/ubc9 and sumo1. In terms of processing, sumoylated.

It localises to the cytoplasm. It is found in the nucleus. Functionally, acts early in neural crest formation, functioning redundantly with the other group E Sox factors sox8 and sox9 to induce neural crest progenitors. Acts downstream of wnt-signaling at the neural plate border. Involved in the specification of neural crest progenitors fated to form the pigment cell lineage. In Xenopus tropicalis (Western clawed frog), this protein is Transcription factor Sox-10.